A 72-amino-acid chain; its full sequence is Translation initiation factor IF-1 (72 aa).

Residues 1–72 (MAKEDAIELQ…SKGRIVFRAR (72 aa)) enclose the S1-like domain.

This sequence belongs to the IF-1 family. As to quaternary structure, component of the 30S ribosomal translation pre-initiation complex which assembles on the 30S ribosome in the order IF-2 and IF-3, IF-1 and N-formylmethionyl-tRNA(fMet); mRNA recruitment can occur at any time during PIC assembly.

The protein resides in the cytoplasm. One of the essential components for the initiation of protein synthesis. Stabilizes the binding of IF-2 and IF-3 on the 30S subunit to which N-formylmethionyl-tRNA(fMet) subsequently binds. Helps modulate mRNA selection, yielding the 30S pre-initiation complex (PIC). Upon addition of the 50S ribosomal subunit IF-1, IF-2 and IF-3 are released leaving the mature 70S translation initiation complex. This Aliivibrio fischeri (strain ATCC 700601 / ES114) (Vibrio fischeri) protein is Translation initiation factor IF-1.